A 525-amino-acid chain; its full sequence is GMP synthase [glutamine-hydrolyzing] (525 aa).

One can recognise a Glutamine amidotransferase type-1 domain in the interval 9–207; it reads RILILDFGSQ…VRDICQCEAL (199 aa). Cys-86 acts as the Nucleophile in catalysis. Active-site residues include His-181 and Glu-183. One can recognise a GMPS ATP-PPase domain in the interval 208-400; it reads WTPAKIIDDA…LGLPYDMLYR (193 aa). 235 to 241 is an ATP binding site; that stretch reads SGGVDSS.

As to quaternary structure, homodimer.

The enzyme catalyses XMP + L-glutamine + ATP + H2O = GMP + L-glutamate + AMP + diphosphate + 2 H(+). It functions in the pathway purine metabolism; GMP biosynthesis; GMP from XMP (L-Gln route): step 1/1. Catalyzes the synthesis of GMP from XMP. This is GMP synthase [glutamine-hydrolyzing] from Klebsiella pneumoniae (strain 342).